The sequence spans 2599 residues: Protein DOP1 homolog (2599 aa).

2 disordered regions span residues 532–571 (EQSG…SDSR) and 595–701 (ASNQ…LDEE). Polar residues-rich tracts occupy residues 534–549 (SGGS…NSAS), 595–604 (ASNQSVGRQS), and 625–636 (ASDTGQQSSSDL). A Phosphoserine modification is found at serine 753. Residues 1240 to 1251 (PRIEIPHKETPL) are compositionally biased toward basic and acidic residues. 2 disordered regions span residues 1240–1316 (PRIE…SSSA) and 1347–1368 (TYRL…EQKD). The span at 1264–1282 (QPSQEQPANQPDNSLQYDQ) shows a compositional bias: polar residues. Basic and acidic residues predominate over residues 1297–1309 (SELRETSIEKEDS). Threonine 1355 carries the post-translational modification Phosphothreonine. 3 positions are modified to phosphoserine: serine 1360, serine 1363, and serine 1371. Residues 1409–1442 (CISKTSTDSNISGSHVEQPEQEEETEPGTESTIN) form a disordered region. Positions 1410 to 1423 (ISKTSTDSNISGSH) are enriched in polar residues. Serine 2525 carries the phosphoserine modification.

This sequence belongs to the DOP1 family.

It is found in the golgi apparatus membrane. Its function is as follows. May be involved in protein traffic between late Golgi and early endosomes. The sequence is that of Protein DOP1 homolog from Drosophila melanogaster (Fruit fly).